A 644-amino-acid chain; its full sequence is Exoribonuclease 2 (644 aa).

Residues 189–516 enclose the RNB domain; it reads REDLTALDFV…NHRLLKAVIK (328 aa). Positions 561–643 constitute an S1 motif domain; that stretch reads DTRFAAEIVD…ETRSIIARPV (83 aa).

Belongs to the RNR ribonuclease family. RNase II subfamily.

It is found in the cytoplasm. The enzyme catalyses Exonucleolytic cleavage in the 3'- to 5'-direction to yield nucleoside 5'-phosphates.. Its function is as follows. Involved in mRNA degradation. Hydrolyzes single-stranded polyribonucleotides processively in the 3' to 5' direction. In Escherichia coli (strain SMS-3-5 / SECEC), this protein is Exoribonuclease 2.